Here is a 447-residue protein sequence, read N- to C-terminus: Gamma-glutamyl phosphate reductase (447 aa).

It belongs to the gamma-glutamyl phosphate reductase family.

It localises to the cytoplasm. It carries out the reaction L-glutamate 5-semialdehyde + phosphate + NADP(+) = L-glutamyl 5-phosphate + NADPH + H(+). Its pathway is amino-acid biosynthesis; L-proline biosynthesis; L-glutamate 5-semialdehyde from L-glutamate: step 2/2. In terms of biological role, catalyzes the NADPH-dependent reduction of L-glutamate 5-phosphate into L-glutamate 5-semialdehyde and phosphate. The product spontaneously undergoes cyclization to form 1-pyrroline-5-carboxylate. The polypeptide is Gamma-glutamyl phosphate reductase (Methanosarcina mazei (strain ATCC BAA-159 / DSM 3647 / Goe1 / Go1 / JCM 11833 / OCM 88) (Methanosarcina frisia)).